An 84-amino-acid polypeptide reads, in one-letter code: MVVIRLARGGSKKRPFFNIVATDSRNRRDGRFIERVGFYNPLAGEGEEGLRIVQDRLTYWEGVGAQLSPTVARLVKQGAKKAAA.

The protein belongs to the bacterial ribosomal protein bS16 family.

This Ralstonia pickettii (strain 12J) protein is Small ribosomal subunit protein bS16.